A 203-amino-acid chain; its full sequence is MHKDSNIIEELIFSFAQLPGLGNRSARRIVLYLMQDKEVRIKNLNNQLTSVLNNIMECDYCGNLDVVSICNICRHSERDSSIIAIVESVADLWALERSKVFKGWYHVLGKTLSAVSGNDAINSLKLPKLLNRIREYKVQEIILATNSTIDGQMTAFFVIDYLKDENLKISKLASGIPLGGELDYLDEGTLLAAFKARQSHDLL.

The segment at 58-73 adopts a C4-type zinc-finger fold; it reads CDYCGNLDVVSICNIC. Residues 81 to 177 enclose the Toprim domain; sequence SIIAIVESVA…KISKLASGIP (97 aa).

Belongs to the RecR family.

Its function is as follows. May play a role in DNA repair. It seems to be involved in an RecBC-independent recombinational process of DNA repair. It may act with RecF and RecO. The chain is Recombination protein RecR from Orientia tsutsugamushi (strain Boryong) (Rickettsia tsutsugamushi).